We begin with the raw amino-acid sequence, 76 residues long: Large ribosomal subunit protein uL29 (76 aa).

It belongs to the universal ribosomal protein uL29 family.

This is Large ribosomal subunit protein uL29 from Corynebacterium efficiens (strain DSM 44549 / YS-314 / AJ 12310 / JCM 11189 / NBRC 100395).